Here is a 1339-residue protein sequence, read N- to C-terminus: MEGGSELLFYVNGRKVTEKNVDPETMLLPYLRKKLRLTGTKYGCGGGGCGACTVMISRYNPITKKIRHYPANACLTPICSLYGAAVTTVEGIGSTKTRIHPVQERIAKCHGTQCGFCTPGMVMSLYTLLRNHPEPTLTQLNDALGGNLCRCTGYRPIINACKTFCKTSGCCQSKENGVCCLDQGMNGLPEFEEGNETSLKLFSEEEFLPLDPTQELIFPPELMTMAEKKTQKTRIFGSDRMTWISPVTLKELLEAKVKYPQAPVVMGNTSVGPDMKFKGIFHPVIISPDRIEELSVVNYTDNGLTLGAAVSLAEVKDILANVTRKLPEEKTQMYHALLKHLETLAGPQIRNMASLGGHIVSRHPDSDLNPLLAVGNCTLNLLSKEGRRQIPLNEQFLRKCPSADLKPEEILISVNIPYSRKWEFVSAFRQAQRQQNALAIVNSGMRVCFGKGDGIIRELSIAYGGVGPTTILANNSCQKLIGRPWNEEMLDAACRLILDEVSLPGSAPGGRVEFKRTLIVSFLFKFYLEVSQILKGMDLVHYPSLASKYESALEDLHSRHYWSTLKYQNADLKQLSQDPIGHPIMHLSGIKHATGEAIYCDDMPVVDRELFLTFVTSSRAHAKIVSIDVSAALSLPGVVDILTGEHLPGINTTFGFLTDADQLLSTDEVSCVGQLVCAVIADSEVQARRAAQQVKIVYQDLEPVILTIEEAIQNKSFFEPERKLEYGNVDEAFKMVDQILEGEIHMGGQEHFYMETQSMLVVPKGEDREIDVYVSAQFPKYIQDITASVLKVSANKVMCHVKRVGGAFGGKVTKTGVLAAITAFAANKHGRPVRCILERGEDILITGGRHPYLGKYKAGFMNDGRILALDMEHYNNAGAFLDESLFVIEMGLLKLENAYKFPNLRCRGWACRTNLPSNTALRGFGFPQAGLITEACITEVAAKCGLPPEKVRMINMYKEIDQTPYKQEINTKNLTQCWKECMATSSYTLRKAAVEKFNSENYWKKKGLAMVPLKYPIGLGSVAAGQAAALVHIYLDGSVLVTHGGIEMGQGVHTKMIQVVSRELRMPLSSIHLRGTSTETIPNTNPSGGSVVADLNGLAVKDACQTLLKRLKPIISKNPKGTWKDWAQAAFNESISLSATGYFRGYESNINWETGEGHPFEYFVYGAACSEVEIDCLTGAHKNIRTDIVMDVGYSINPALDVGQIEGAFIQGMGLYTIEELNYSPQGVLYTRGPNQYKIPAICDIPMELHISFLPPSENSNTLYSSKGLGESGIFLGCSVFFAIHDAIRAARQERGLPGPLRLNSPLTPEKIRMACEDKFTKMIPRDEPGSYVPWSVPI.

One can recognise a 2Fe-2S ferredoxin-type domain in the interval serine 5–isoleucine 92. The [2Fe-2S] cluster site is built by cysteine 44, cysteine 49, cysteine 52, and cysteine 74. Glutamine 113 contributes to the Mo-molybdopterin binding site. Residues cysteine 114, cysteine 117, cysteine 149, and cysteine 151 each coordinate [2Fe-2S] cluster. Residue cysteine 151 coordinates Mo-molybdopterin. In terms of domain architecture, FAD-binding PCMH-type spans phenylalanine 236 to lysine 421. FAD-binding positions include valine 264–valine 271, alanine 345, serine 354, histidine 358, aspartate 367, and leucine 411. Mo-molybdopterin is bound by residues alanine 807–phenylalanine 808 and methionine 1048. Serine 1069 bears the Phosphoserine mark. Residues glycine 1089–valine 1092, glutamine 1204, and leucine 1269 each bind Mo-molybdopterin. Glutamate 1271 serves as the catalytic Proton acceptor; for azaheterocycle hydroxylase activity.

The protein belongs to the xanthine dehydrogenase family. In terms of assembly, homodimer. [2Fe-2S] cluster serves as cofactor. FAD is required as a cofactor. The cofactor is Mo-molybdopterin. Post-translationally, the N-terminus is blocked. In terms of tissue distribution, expressed at high levels in liver, lung and spleen. Also expressed in kindey, eye, testis, duodenum, esophagus and thymus (at protein level).

The protein resides in the cytoplasm. It catalyses the reaction an aldehyde + O2 + H2O = a carboxylate + H2O2 + H(+). The enzyme catalyses retinal + O2 + H2O = retinoate + H2O2 + H(+). In terms of biological role, oxidase with broad substrate specificity, oxidizing aromatic azaheterocycles, such as N1-methylnicotinamide, N-methylphthalazinium and phthalazine, as well as aldehydes, such as benzaldehyde, retinal, pyridoxal, and vanillin. Plays a key role in the metabolism of xenobiotics and drugs containing aromatic azaheterocyclic substituents. Is probably involved in the regulation of reactive oxygen species homeostasis. May be a prominent source of superoxide generation via the one-electron reduction of molecular oxygen. May also catalyze nitric oxide (NO) production via the reduction of nitrite to NO with NADH or aldehyde as electron donor. May play a role in adipogenesis. The chain is Aldehyde oxidase 1 from Bos taurus (Bovine).